A 161-amino-acid polypeptide reads, in one-letter code: MTIEKPKISVAFICLGNFCRSPMAEAIFKHEVEKANLENRFNKIDSFGTSNYHVGESPDHRTVSICKQHGVKINHKGKQIKTKHFDEYDYIIGMDESNINNLKKIQPEGSKAKVCLFGDWNTNDGTVQTIIEDPWYGDIQDFEYNFKQITYFSKQFLKKEL.

Cys14 (nucleophile) is an active-site residue. Arg20 functions as the Transition state stabilizer in the catalytic mechanism. Residue Ser57 is modified to Phosphoserine. The active-site Proton donor is the Asp133.

Belongs to the low molecular weight phosphotyrosine protein phosphatase family.

The protein resides in the cytoplasm. It carries out the reaction O-phospho-L-tyrosyl-[protein] + H2O = L-tyrosyl-[protein] + phosphate. The catalysed reaction is a phosphate monoester + H2O = an alcohol + phosphate. Acts on tyrosine phosphorylated proteins, low-MW aryl phosphates and natural and synthetic acyl phosphates. This Saccharomyces cerevisiae (strain ATCC 204508 / S288c) (Baker's yeast) protein is Low molecular weight phosphotyrosine protein phosphatase.